The chain runs to 484 residues: Xylulose kinase (484 aa).

77–78 (MH) contributes to the substrate binding site. D233 acts as the Proton acceptor in catalysis.

The protein belongs to the FGGY kinase family. Homodimer.

The catalysed reaction is D-xylulose + ATP = D-xylulose 5-phosphate + ADP + H(+). It carries out the reaction 1-deoxy-D-xylulose + ATP = 1-deoxy-D-xylulose 5-phosphate + ADP + H(+). Its activity is regulated as follows. Sugar binding is accompanied by a dramatic hinge-bending movement that enhances interactions with Mg-ATP. Its function is as follows. Catalyzes the phosphorylation of D-xylulose to D-xylulose 5-phosphate. Also catalyzes the phosphorylation of 1-deoxy-D-xylulose to 1-deoxy-D-xylulose 5-phosphate, with lower efficiency. Can also use D-ribulose, xylitol and D-arabitol, but D-xylulose is preferred over the other substrates. Has a weak substrate-independent Mg-ATP-hydrolyzing activity. This chain is Xylulose kinase, found in Escherichia coli (strain K12).